The sequence spans 659 residues: Cysteine-rich receptor-like protein kinase 5 (659 aa).

An N-terminal signal peptide occupies residues 1–24; it reads MSAYTSLNFLFLLTFFIGSLRVSA. Residues 25–279 lie on the Extracellular side of the membrane; the sequence is QLQDPTYVGH…FPPGKGKNST (255 aa). 2 Gnk2-homologous domains span residues 28–132 and 138–243; these read DPTY…DRNI and TTTT…VYPF. Asparagine 175 and asparagine 277 each carry an N-linked (GlcNAc...) asparagine glycan. Residues 280–300 traverse the membrane as a helical segment; sequence VIIIAIVVPVAISVLICVAVF. At 301–659 the chain is on the cytoplasmic side; it reads SFHASKRAKK…AASITILAPR (359 aa). Residues 340–619 form the Protein kinase domain; it reads FSMCNKLGQG…QMLTTSSIAL (280 aa). Residues 346–354 and lysine 368 each bind ATP; that span reads LGQGGFGQV. Tyrosine 413 bears the Phosphotyrosine mark. The active-site Proton acceptor is aspartate 465. At threonine 505 the chain carries Phosphothreonine. Tyrosine 513 is modified (phosphotyrosine).

It belongs to the protein kinase superfamily. Ser/Thr protein kinase family. CRK subfamily. In terms of assembly, interacts with CRKIP1 (KAPP), CRKIP2 and CRKIP3, three kinase-associated type 2C proteins.

The protein resides in the membrane. The enzyme catalyses L-seryl-[protein] + ATP = O-phospho-L-seryl-[protein] + ADP + H(+). It catalyses the reaction L-threonyl-[protein] + ATP = O-phospho-L-threonyl-[protein] + ADP + H(+). Involved in multiple distinct defense responses. May function as a disease resistance (R) protein. The sequence is that of Cysteine-rich receptor-like protein kinase 5 (CRK5) from Arabidopsis thaliana (Mouse-ear cress).